The primary structure comprises 402 residues: Leucine aminopeptidase 1 (402 aa).

The N-terminal stretch at 1-18 (MKISNASLLALLLPAASA) is a signal peptide. Residues 19–92 (RFVEQAEQNR…GTFNKRPYKK (74 aa)) constitute a propeptide that is removed on maturation. Residues asparagine 111 and asparagine 184 are each glycosylated (N-linked (GlcNAc...) asparagine). Zn(2+)-binding residues include histidine 192, aspartate 211, glutamate 250, and aspartate 277. Asparagine 304 carries an N-linked (GlcNAc...) asparagine glycan. Cysteine 326 and cysteine 330 are joined by a disulfide. Histidine 359 provides a ligand contact to Zn(2+).

The protein belongs to the peptidase M28 family. M28E subfamily. As to quaternary structure, monomer. Zn(2+) is required as a cofactor.

Its subcellular location is the secreted. In terms of biological role, extracellular aminopeptidase that allows assimilation of proteinaceous substrates. The protein is Leucine aminopeptidase 1 (lap1) of Neurospora crassa (strain ATCC 24698 / 74-OR23-1A / CBS 708.71 / DSM 1257 / FGSC 987).